We begin with the raw amino-acid sequence, 622 residues long: Threonine--tRNA ligase (622 aa).

The editing domain stretch occupies residues 1–141 (MKTLLIHSDY…SRKITTERKE (141 aa)). The segment at 199 to 498 (PHVKYIKEKE…TLENKPPALP (300 aa)) is catalytic. Residues Cys291, His343, and His467 each coordinate Zn(2+).

This sequence belongs to the class-II aminoacyl-tRNA synthetase family. In terms of assembly, homodimer. Zn(2+) is required as a cofactor.

The protein localises to the cytoplasm. It catalyses the reaction tRNA(Thr) + L-threonine + ATP = L-threonyl-tRNA(Thr) + AMP + diphosphate + H(+). Catalyzes the attachment of threonine to tRNA(Thr) in a two-step reaction: L-threonine is first activated by ATP to form Thr-AMP and then transferred to the acceptor end of tRNA(Thr). Also edits incorrectly charged L-seryl-tRNA(Thr). The sequence is that of Threonine--tRNA ligase from Methanococcus maripaludis (strain C7 / ATCC BAA-1331).